A 194-amino-acid polypeptide reads, in one-letter code: MSRWTHRTFFIALSAIVTTAGFGSSGCAHGNSSTSESAVPSTFPGISSSITAPPATGLPAPEVLTNVLSRLADPNIPGIDKLPLIESATPDSAVTLDKFSNALRDNGYLPMTFTANNIAWSNKNPSDVLATISVNIAQTNNSVFSFPMEFTPFPPPQQSWQLSKRTADMLLEFGNSSGLTNPAPIKAPTPTPSH.

A signal peptide spans 1–26 (MSRWTHRTFFIALSAIVTTAGFGSSG). Cys27 carries the N-palmitoyl cysteine lipid modification. The S-diacylglycerol cysteine moiety is linked to residue Cys27. Positions 174 to 194 (GNSSGLTNPAPIKAPTPTPSH) are disordered. A compositionally biased stretch (pro residues) spans 185–194 (IKAPTPTPSH).

This sequence belongs to the MTB12 family.

The protein resides in the cell membrane. In Mycobacterium leprae (strain TN), this protein is Putative lipoprotein LppK (lppK).